An 83-amino-acid chain; its full sequence is MSGSTGERSFADIITSIRYWVIHSITIPSLFIAGWLFVSTGLAYDVFGSPRPNEYFTESRQGIPLITGRFDSLEQLNEFSRSF.

The helical transmembrane segment at 21–35 (VIHSITIPSLFIAGW) threads the bilayer. H23 lines the heme pocket.

This sequence belongs to the PsbE/PsbF family. Heterodimer of an alpha subunit and a beta subunit. PSII is composed of 1 copy each of membrane proteins PsbA, PsbB, PsbC, PsbD, PsbE, PsbF, PsbH, PsbI, PsbJ, PsbK, PsbL, PsbM, PsbT, PsbX, PsbY, PsbZ, Psb30/Ycf12, at least 3 peripheral proteins of the oxygen-evolving complex and a large number of cofactors. It forms dimeric complexes. Requires heme b as cofactor.

It is found in the plastid. Its subcellular location is the chloroplast thylakoid membrane. Its function is as follows. This b-type cytochrome is tightly associated with the reaction center of photosystem II (PSII). PSII is a light-driven water:plastoquinone oxidoreductase that uses light energy to abstract electrons from H(2)O, generating O(2) and a proton gradient subsequently used for ATP formation. It consists of a core antenna complex that captures photons, and an electron transfer chain that converts photonic excitation into a charge separation. The sequence is that of Cytochrome b559 subunit alpha from Citrus sinensis (Sweet orange).